A 160-amino-acid chain; its full sequence is MD-2-related lipid-recognition protein ROSY1 (160 aa).

Residues 1-23 (MAISHTQLLLLLLVSLFFSPALC) form the signal peptide.

Interacts with SYT1. In terms of tissue distribution, expressed exclusively in roots, in epidermis and cortex cells of the root elongation zone, and lateral root cap cells at the root tip.

The protein localises to the cytoplasm. Involved in the regulation of gravitropic response and basipetal auxin transport in roots. Involved in salt stress tolerance. May facilitate membrane trafficking and asymmetric cell elongation via SYT1. Binds stigmasterol and dipalmitoyl phosphoethanolamine (DPPE) in vitro. The chain is MD-2-related lipid-recognition protein ROSY1 from Arabidopsis thaliana (Mouse-ear cress).